Here is a 223-residue protein sequence, read N- to C-terminus: tRNA (guanine-N(7)-)-methyltransferase (223 aa).

E45, E70, and D125 together coordinate S-adenosyl-L-methionine. D125 is a catalytic residue. Residues K129, D161, and 201–204 (TEYE) each bind substrate.

The protein belongs to the class I-like SAM-binding methyltransferase superfamily. TrmB family.

The enzyme catalyses guanosine(46) in tRNA + S-adenosyl-L-methionine = N(7)-methylguanosine(46) in tRNA + S-adenosyl-L-homocysteine. It functions in the pathway tRNA modification; N(7)-methylguanine-tRNA biosynthesis. Functionally, catalyzes the formation of N(7)-methylguanine at position 46 (m7G46) in tRNA. This is tRNA (guanine-N(7)-)-methyltransferase from Mesoplasma florum (strain ATCC 33453 / NBRC 100688 / NCTC 11704 / L1) (Acholeplasma florum).